Here is a 218-residue protein sequence, read N- to C-terminus: LexA repressor (218 aa).

The H-T-H motif DNA-binding region spans 28–48 (RAEIAAEFGFSSPNSAEEHLR). Active-site for autocatalytic cleavage activity residues include Ser136 and Lys173.

This sequence belongs to the peptidase S24 family. In terms of assembly, homodimer.

It catalyses the reaction Hydrolysis of Ala-|-Gly bond in repressor LexA.. Represses a number of genes involved in the response to DNA damage (SOS response), including recA and lexA. In the presence of single-stranded DNA, RecA interacts with LexA causing an autocatalytic cleavage which disrupts the DNA-binding part of LexA, leading to derepression of the SOS regulon and eventually DNA repair. This chain is LexA repressor, found in Cupriavidus metallidurans (strain ATCC 43123 / DSM 2839 / NBRC 102507 / CH34) (Ralstonia metallidurans).